Reading from the N-terminus, the 311-residue chain is Tricarboxylate transport protein, mitochondrial (311 aa).

A propeptide spans 1–13 (MAAPRGPRALSAA) (removed in mature form). The disordered stretch occupies residues 1 to 21 (MAAPRGPRALSAAAPGSGKPK). Solcar repeat units lie at residues 23–111 (THPG…LSNH), 122–208 (RRGL…LRNW), and 218–303 (MNPL…VVKL). 3 helical membrane-spanning segments follow: residues 29–46 (ILAG…TFPT), 86–105 (GLSS…FGMF), and 129–143 (LGAG…VCPM). Ser156 is modified (phosphoserine). 3 helical membrane-spanning segments follow: residues 183–202 (GLTA…FFVM), 224–241 (GVFG…NTPL), and 278–297 (GTVP…FIIY).

It belongs to the mitochondrial carrier (TC 2.A.29) family. In terms of processing, possesses a short cleavable presequence, which, however, is found to be dispensable both for targeting to mitochondria and insertion into the inner membrane. However, the presequence is required to keep SLC25A1 in a soluble state and thus in an import-competent state. Mature SLC25A1 lacking the presequence is prone to aggregation. Expressed minimally but ubiquitously throughout the adult brain. Detected at higher levels in the olfactory bulb, neocortex and cerebellum. Also expressed in a subset of large cells in the globus pallidus.

The protein resides in the mitochondrion inner membrane. The protein localises to the mitochondrion membrane. The catalysed reaction is (S)-malate(in) + citrate(out) = (S)-malate(out) + citrate(in). The enzyme catalyses D-threo-isocitrate(in) + citrate(out) = D-threo-isocitrate(out) + citrate(in). It catalyses the reaction citrate(out) + succinate(in) = citrate(in) + succinate(out). It carries out the reaction cis-aconitate(in) + citrate(out) = cis-aconitate(out) + citrate(in). The catalysed reaction is trans-aconitate(in) + citrate(out) = trans-aconitate(out) + citrate(in). The enzyme catalyses phosphoenolpyruvate(in) + citrate(out) = phosphoenolpyruvate(out) + citrate(in). It catalyses the reaction maleate(in) + citrate(out) = maleate(out) + citrate(in). In terms of biological role, mitochondrial electroneutral antiporter that exports citrate from the mitochondria into the cytosol in exchange for malate. Also able to mediate the exchange of citrate for isocitrate, phosphoenolpyruvate, cis-aconitate and to a lesser extent trans-aconitate, maleate and succinate. In the cytoplasm, citrate plays important roles in fatty acid and sterol synthesis, regulation of glycolysis, protein acetylation, and other physiopathological processes. The chain is Tricarboxylate transport protein, mitochondrial from Mus musculus (Mouse).